The sequence spans 129 residues: MLKQSKKSSKKLKKSVIDGLIIINSTFNNTIVTATDCYGKVIAWASGGTEGFKGAKKGTPFAAQSATEKLIKALLEQGTQRIHISVSGPGPGRETSIRSFQTSGLQIISIKDITSVPFNGCRPPKKRRI.

Belongs to the universal ribosomal protein uS11 family. Part of the 30S ribosomal subunit.

It localises to the plastid. Its subcellular location is the chloroplast. The chain is Small ribosomal subunit protein uS11c from Cyanidium caldarium (Red alga).